Here is a 355-residue protein sequence, read N- to C-terminus: Protein RecA (355 aa).

Residue 72–79 (GPESSGKT) participates in ATP binding.

This sequence belongs to the RecA family.

It localises to the cytoplasm. Can catalyze the hydrolysis of ATP in the presence of single-stranded DNA, the ATP-dependent uptake of single-stranded DNA by duplex DNA, and the ATP-dependent hybridization of homologous single-stranded DNAs. It interacts with LexA causing its activation and leading to its autocatalytic cleavage. The chain is Protein RecA from Wolbachia sp. subsp. Drosophila simulans (strain wRi).